Here is a 427-residue protein sequence, read N- to C-terminus: Interleukin-13 receptor subunit alpha-1 (427 aa).

Positions 1 to 21 (MEWPARLCGLWALLLCAGGGG) are cleaved as a signal peptide. Topologically, residues 22 to 343 (GGGGAAPTET…MSIGKKRNST (322 aa)) are extracellular. Fibronectin type-III domains are found at residues 34–123 (PVTN…PPEG), 128–226 (AVTE…TSRV), and 227–339 (KPDP…IGKK). N-linked (GlcNAc...) asparagine glycosylation is found at N37 and N61. Intrachain disulfides connect C62-C102, C95-C117, and C134-C144. N-linked (GlcNAc...) asparagine glycans are attached at residues N105, N138, and N157. Cysteines 173 and 185 form a disulfide. N235, N265, N293, N329, and N341 each carry an N-linked (GlcNAc...) asparagine glycan. Cystine bridges form between C257–C320 and C282–C296. A WSXWS motif motif is present at residues 327 to 331 (WSNWS). A helical membrane pass occupies residues 344-367 (LYITMLLIVPVIVAGAIIVLLLYL). Residues 368–427 (KRLKIIIFPPIPDPGKIFKEMFGDQNDDTLHWKKYDIYEKQTKEETDSVVLIENLKKASQ) are Cytoplasmic-facing. Positions 374–382 (IFPPIPDPG) match the Box 1 motif motif.

The protein belongs to the type I cytokine receptor family. Type 5 subfamily. In terms of assembly, interleukin-13 receptor is a complex of IL4R, IL13RA1, and possibly other components. Interacts with TRAF3IP1. Interacts with IL4. Ubiquitous. Highest levels in heart, liver, skeletal muscle and ovary; lowest levels in brain, lung and kidney. Also found in B-cells, T-cells and endothelial cells.

The protein localises to the membrane. Its function is as follows. Binds with low affinity to interleukin-13 (IL13). Together with IL4RA can form a functional receptor for IL13. Also serves as an alternate accessory protein to the common cytokine receptor gamma chain for interleukin-4 (IL4) signaling, but cannot replace the function of IL2RG in allowing enhanced interleukin-2 (IL2) binding activity. The polypeptide is Interleukin-13 receptor subunit alpha-1 (IL13RA1) (Homo sapiens (Human)).